A 30-amino-acid chain; its full sequence is Varv peptide H (30 aa).

The segment at residues 1 to 30 (GLPVCGETCFGGTCNTPGCSCETWPVCSRN) is a cross-link (cyclopeptide (Gly-Asn)). Intrachain disulfides connect Cys-5-Cys-19, Cys-9-Cys-21, and Cys-14-Cys-27.

Post-translationally, this is a cyclic peptide.

Functionally, probably participates in a plant defense mechanism. The protein is Varv peptide H of Viola arvensis (European field pansy).